A 538-amino-acid chain; its full sequence is MEMELDSEGRMVVRPLLTDLYQATMALGYWRAGRACEAAEFELFFRHCPFGGSFALSAGLQDCMRFLRAFRLRDADVQFLASVLPPDTDPAFFEHLRALDCSGVTVRALPEGSLAFPGVPLLQVSGPLLLVQLLETPLLCLVSYASLVATNAARLRLIAGPDKKLLEMGLRRAQGPDGGFTASIYSYLGGFDSSSNTLAGQLRGVPVAGTLAHSFVTSFSGSEVPPDPMLAPASSEGPTVDLPARVNLWLKRVCLYLGLEEQEPHPGERAAFVAYALAFPRAFQGLLDSYSVRRSGLPNFLAVALALGELGYRAVGVRLDSGDLLQQAKEIRGIFRTAGAQFQMPWLESVPIAVSNNIDESELMRLAQKGSEVNVIGIGTSVVTCPKQPSMGCVYKLVSVGGQPRIKLTEDPEKQTLPGSKAAFRFLGPDGSLLLDLLQLAEEPPPKAGQELRVWPRGTQEPCTVKPAQVEPLLRLYLQQGQLCEPLPSLDESRRFAQQSLSLLRPAHKQLQSPAVYPVALSEKLRALVDSLSARGPL.

Nicotinate contacts are provided by tyrosine 21 and threonine 210. Residue histidine 213 is modified to Phosphohistidine. Arginine 318 provides a ligand contact to nicotinate. 5-phospho-alpha-D-ribose 1-diphosphate is bound at residue threonine 380.

Belongs to the NAPRTase family. As to quaternary structure, homodimer. The cofactor is Mg(2+). Mn(2+) serves as cofactor. Transiently phosphorylated on a His residue during the reaction cycle. Phosphorylation strongly increases the affinity for substrates and increases the rate of nicotinate D-ribonucleotide production. Dephosphorylation regenerates the low-affinity form of the enzyme, leading to product release. As to expression, abundantly expressed in the small intestine, liver and kidney.

The protein localises to the cytoplasm. It is found in the cytosol. The catalysed reaction is nicotinate + 5-phospho-alpha-D-ribose 1-diphosphate + ATP + H2O = nicotinate beta-D-ribonucleotide + ADP + phosphate + diphosphate. It participates in cofactor biosynthesis; NAD(+) biosynthesis; nicotinate D-ribonucleotide from nicotinate: step 1/1. In terms of biological role, catalyzes the first step in the biosynthesis of NAD from nicotinic acid, the ATP-dependent synthesis of beta-nicotinate D-ribonucleotide from nicotinate and 5-phospho-D-ribose 1-phosphate. Helps prevent cellular oxidative stress via its role in NAD biosynthesis. The sequence is that of Nicotinate phosphoribosyltransferase (Naprt) from Mus musculus (Mouse).